The primary structure comprises 506 residues: Cytochrome P450 monooxygenase tpcB (506 aa).

Residue cysteine 450 coordinates heme.

Belongs to the cytochrome P450 family. The cofactor is heme.

It functions in the pathway secondary metabolite biosynthesis; terpenoid biosynthesis. In terms of biological role, cytochrome P450 monooxygenase; part of the gene cluster that mediates the biosynthesis of terpestacin. The bifunctional terpene synthase tpcA converts isopentenyl diphosphate (IPP) and dimethylallyl diphosphate (DMAPP) into the sesterterpene preterpestacin I. The C-terminal prenyltransferase (PT) domain of tpcA catalyzes formation of GFPP, whereas the N-terminal terpene cyclase (TC) domain catalyzes the cyclization of GFPP into preterpestacin I. The cytochrome P450 monooxygenase tpcB then hydroxylates preterpestacin I to yield 24-hydroxypreterpstacin I (renamed as preterpestacin II) whereas the cytochrome P450 monooxygenase tpcC further hydroxylates preterpestacin II to yield 16,17-dihydroxypreterpestacin II (renamed as preterpestacin III). Finally, the FAD-dependent monooxygenase tpcD converts preterpestacin III into terpestacin. This chain is Cytochrome P450 monooxygenase tpcB, found in Cochliobolus heterostrophus (strain C5 / ATCC 48332 / race O) (Southern corn leaf blight fungus).